A 391-amino-acid chain; its full sequence is Oocyte zinc finger protein XlCOF7.2 (391 aa).

4 consecutive C2H2-type zinc fingers follow at residues 284–306 (FPCSECGKCFINQSTLARHYRTH), 312–334 (YPCSECGKCFASSTYLRDHRRIH), 340–362 (SSCSECGKYFLNCWSLARHHRTH), and 368–391 (YSCSECGKSFAISSDLAGHRRRTH).

This sequence belongs to the krueppel C2H2-type zinc-finger protein family.

The protein localises to the nucleus. In terms of biological role, may be involved in transcriptional regulation. The polypeptide is Oocyte zinc finger protein XlCOF7.2 (Xenopus laevis (African clawed frog)).